A 201-amino-acid chain; its full sequence is Superoxide dismutase [Mn] (201 aa).

The Mn(2+) site is built by H27, H81, D163, and H167.

It belongs to the iron/manganese superoxide dismutase family. In terms of assembly, homodimer. Mn(2+) serves as cofactor.

The protein localises to the secreted. It catalyses the reaction 2 superoxide + 2 H(+) = H2O2 + O2. Functionally, destroys superoxide anion radicals which are normally produced within the cells and which are toxic to biological systems. This chain is Superoxide dismutase [Mn] (sodA), found in Streptococcus pyogenes serotype M18 (strain MGAS8232).